A 362-amino-acid polypeptide reads, in one-letter code: 3-dehydroquinate synthase (362 aa).

Residues Asp71–Lys76, Gly105–Asp109, Thr129–Thr130, Lys142, Lys151, and Cys169–Thr172 contribute to the NAD(+) site. Residues Glu184, His248, and His265 each contribute to the Zn(2+) site.

This sequence belongs to the sugar phosphate cyclases superfamily. Dehydroquinate synthase family. Co(2+) serves as cofactor. Zn(2+) is required as a cofactor. Requires NAD(+) as cofactor.

It localises to the cytoplasm. The enzyme catalyses 7-phospho-2-dehydro-3-deoxy-D-arabino-heptonate = 3-dehydroquinate + phosphate. The protein operates within metabolic intermediate biosynthesis; chorismate biosynthesis; chorismate from D-erythrose 4-phosphate and phosphoenolpyruvate: step 2/7. In terms of biological role, catalyzes the conversion of 3-deoxy-D-arabino-heptulosonate 7-phosphate (DAHP) to dehydroquinate (DHQ). In Yersinia pseudotuberculosis serotype O:1b (strain IP 31758), this protein is 3-dehydroquinate synthase.